We begin with the raw amino-acid sequence, 350 residues long: Mannonate dehydratase (350 aa).

The protein belongs to the mannonate dehydratase family. Fe(2+) serves as cofactor. The cofactor is Mn(2+).

It catalyses the reaction D-mannonate = 2-dehydro-3-deoxy-D-gluconate + H2O. It participates in carbohydrate metabolism; pentose and glucuronate interconversion. Its function is as follows. Catalyzes the dehydration of D-mannonate. The protein is Mannonate dehydratase of Clostridium perfringens (strain 13 / Type A).